The following is a 196-amino-acid chain: Alpha-crystallin A chain (196 aa).

Residue methionine 1 is modified to N-acetylmethionine. The segment at 1–63 (MDVTIQHPWF…RTVLDSCISE (63 aa)) is required for complex formation with BFSP1 and BFSP2. Position 6 is a deamidated glutamine; partial (glutamine 6). Position 45 is a phosphoserine (serine 45). Glutamine 50 carries the post-translational modification Deamidated glutamine; partial. The sHSP domain occupies 76–185 (HAGNPENNPI…GHSERAIPVS (110 aa)). An N6-acetyllysine mark is found at lysine 93 and lysine 122. Histidine 123 is a Zn(2+) binding site. At asparagine 124 the chain carries Deamidated asparagine; partial. The Zn(2+) site is built by glutamate 125 and histidine 130. Residue serine 145 is modified to Phosphoserine. Glutamine 170 carries the deamidated glutamine; partial modification. The interval 170–196 (QSGLDAGHSERAIPVSQEEKPSSAPLF) is disordered. Positions 176–190 (GHSERAIPVSQEEKP) are enriched in basic and acidic residues. Residue histidine 177 coordinates Zn(2+). Serine 185 carries an O-linked (GlcNAc) serine glycan.

Belongs to the small heat shock protein (HSP20) family. Heteromer composed of three CRYAA and one CRYAB subunits. Inter-subunit bridging via zinc ions enhances stability, which is crucial as there is no protein turn over in the lens. Can also form homodimers and homotetramers (dimers of dimers) which serve as the building blocks of homooligomers. Within homooligomers, the zinc-binding motif is created from residues of 3 different molecules. His-123 and Glu-125 from one molecule are ligands of the zinc ion, and His-130 and His-177 residues from additional molecules complete the site with tetrahedral coordination geometry. Part of a complex required for lens intermediate filament formation composed of BFSP1, BFSP2 and CRYAA. Acetylation at Lys-93 may increase chaperone activity. In terms of processing, undergoes age-dependent proteolytical cleavage at the C-terminus.

It is found in the cytoplasm. The protein resides in the nucleus. Functionally, contributes to the transparency and refractive index of the lens. Acts as a chaperone, preventing aggregation of various proteins under a wide range of stress conditions. Required for the correct formation of lens intermediate filaments as part of a complex composed of BFSP1, BFSP2 and CRYAA. In Spalax ehrenbergi (Middle East blind mole rat), this protein is Alpha-crystallin A chain (CRYAA).